Consider the following 434-residue polypeptide: Homogentisate 1,2-dioxygenase (434 aa).

The active-site Proton acceptor is the His289. Fe cation is bound by residues His332 and Glu338. Homogentisate-binding residues include Tyr347 and His368. A Fe cation-binding site is contributed by His368.

This sequence belongs to the homogentisate dioxygenase family. In terms of assembly, hexamer; dimer of trimers. The cofactor is Fe cation.

It catalyses the reaction homogentisate + O2 = 4-maleylacetoacetate + H(+). The protein operates within amino-acid degradation; L-phenylalanine degradation; acetoacetate and fumarate from L-phenylalanine: step 4/6. Involved in the catabolism of homogentisate (2,5-dihydroxyphenylacetate or 2,5-OH-PhAc), a central intermediate in the degradation of phenylalanine and tyrosine. Catalyzes the oxidative ring cleavage of the aromatic ring of homogentisate to yield maleylacetoacetate. This is Homogentisate 1,2-dioxygenase from Pseudomonas syringae pv. tomato (strain ATCC BAA-871 / DC3000).